We begin with the raw amino-acid sequence, 60 residues long: Large ribosomal subunit protein uL30 (60 aa).

It belongs to the universal ribosomal protein uL30 family. In terms of assembly, part of the 50S ribosomal subunit.

The sequence is that of Large ribosomal subunit protein uL30 from Lactobacillus johnsonii (strain CNCM I-12250 / La1 / NCC 533).